The sequence spans 94 residues: Co-chaperonin GroES (94 aa).

Belongs to the GroES chaperonin family. Heptamer of 7 subunits arranged in a ring. Interacts with the chaperonin GroEL.

It is found in the cytoplasm. Functionally, together with the chaperonin GroEL, plays an essential role in assisting protein folding. The GroEL-GroES system forms a nano-cage that allows encapsulation of the non-native substrate proteins and provides a physical environment optimized to promote and accelerate protein folding. GroES binds to the apical surface of the GroEL ring, thereby capping the opening of the GroEL channel. In Listeria innocua serovar 6a (strain ATCC BAA-680 / CLIP 11262), this protein is Co-chaperonin GroES.